Here is a 123-residue protein sequence, read N- to C-terminus: Transmembrane protein 80 (123 aa).

A run of 4 helical transmembrane segments spans residues 2–22 (LFHL…LMIV), 35–55 (LALD…QLYL), 68–88 (LAAS…FLLW), and 102–122 (VLLV…ADFI).

It is found in the membrane. The protein resides in the cell projection. The protein localises to the cilium. The protein is Transmembrane protein 80 (Tmem80) of Mus musculus (Mouse).